A 126-amino-acid polypeptide reads, in one-letter code: Heterotrimeric G protein gamma subunit GPG1 (126 aa).

As to quaternary structure, g proteins are composed of 3 units, alpha, beta and gamma. GPG1 interacts with the beta subunits GBP1 and GPB2.

The protein localises to the cytoplasm. Functionally, gamma subunit of a guanine nucleotide-binding protein (G protein). G proteins are involved as modulators or transducers in various transmembrane signaling systems. The beta and gamma chains are required for the GTPase activity, for replacement of GDP by GTP, and for G protein-effector interaction. Involved in the determination of the cAMP level according to nutritional conditions, most probably as a regulator of cAMP phosphodiesterase. Required for the control of pseudohyphal and haploid invasive growth. The sequence is that of Heterotrimeric G protein gamma subunit GPG1 (GPG1) from Saccharomyces cerevisiae (strain ATCC 204508 / S288c) (Baker's yeast).